Reading from the N-terminus, the 85-residue chain is uncharacterized protein (85 aa).

Belongs to the SF3B5 family.

This is an uncharacterized protein from Schizosaccharomyces pombe (strain 972 / ATCC 24843) (Fission yeast).